The primary structure comprises 171 residues: Xanthine-guanine phosphoribosyltransferase (171 aa).

Residues 51–52 (RG) and 106–114 (DDLVDSGKT) each bind 5-phospho-alpha-D-ribose 1-diphosphate. D107 contacts Mg(2+). The guanine site is built by D110 and I153. Xanthine contacts are provided by D110 and I153. GMP-binding positions include 110–114 (DSGKT) and 152–153 (WI).

It belongs to the purine/pyrimidine phosphoribosyltransferase family. XGPT subfamily. Homotetramer. It depends on Mg(2+) as a cofactor.

It is found in the cell inner membrane. It catalyses the reaction GMP + diphosphate = guanine + 5-phospho-alpha-D-ribose 1-diphosphate. The catalysed reaction is XMP + diphosphate = xanthine + 5-phospho-alpha-D-ribose 1-diphosphate. It carries out the reaction IMP + diphosphate = hypoxanthine + 5-phospho-alpha-D-ribose 1-diphosphate. The protein operates within purine metabolism; GMP biosynthesis via salvage pathway; GMP from guanine: step 1/1. It functions in the pathway purine metabolism; XMP biosynthesis via salvage pathway; XMP from xanthine: step 1/1. Functionally, purine salvage pathway enzyme that catalyzes the transfer of the ribosyl-5-phosphate group from 5-phospho-alpha-D-ribose 1-diphosphate (PRPP) to the N9 position of the 6-oxopurines guanine and xanthine to form the corresponding ribonucleotides GMP (guanosine 5'-monophosphate) and XMP (xanthosine 5'-monophosphate), with the release of PPi. To a lesser extent, also acts on hypoxanthine. This is Xanthine-guanine phosphoribosyltransferase from Ruegeria pomeroyi (strain ATCC 700808 / DSM 15171 / DSS-3) (Silicibacter pomeroyi).